Reading from the N-terminus, the 381-residue chain is Flap endonuclease 1 (381 aa).

The tract at residues 1 to 105 (MGIKNLATLI…YELDKRKVRR (105 aa)) is N-domain. Asp34 serves as a coordination point for Mg(2+). Residues Arg47 and Arg71 each coordinate DNA. Asp87, Glu156, Glu158, Asp177, and Asp179 together coordinate Mg(2+). The interval 120–251 (EIIKHERRLV…VNALKLIKEH (132 aa)) is I-domain. Glu156 contributes to the DNA binding site. Gly229 and Asp231 together coordinate DNA. Asp231 is a Mg(2+) binding site. An interaction with PCNA region spans residues 339–347 (VQKRLDSFF). The tract at residues 360–381 (AAKKAKDAKKKAAAKGKIAKRR) is disordered. Residues 365–381 (KDAKKKAAAKGKIAKRR) show a composition bias toward basic residues.

This sequence belongs to the XPG/RAD2 endonuclease family. FEN1 subfamily. In terms of assembly, interacts with PCNA. Three molecules of FEN1 bind to one PCNA trimer with each molecule binding to one PCNA monomer. PCNA stimulates the nuclease activity without altering cleavage specificity. It depends on Mg(2+) as a cofactor. Phosphorylated. Phosphorylation upon DNA damage induces relocalization to the nuclear plasma.

The protein localises to the nucleus. It localises to the nucleolus. Its subcellular location is the nucleoplasm. The protein resides in the mitochondrion. Functionally, structure-specific nuclease with 5'-flap endonuclease and 5'-3' exonuclease activities involved in DNA replication and repair. During DNA replication, cleaves the 5'-overhanging flap structure that is generated by displacement synthesis when DNA polymerase encounters the 5'-end of a downstream Okazaki fragment. It enters the flap from the 5'-end and then tracks to cleave the flap base, leaving a nick for ligation. Also involved in the long patch base excision repair (LP-BER) pathway, by cleaving within the apurinic/apyrimidinic (AP) site-terminated flap. Acts as a genome stabilization factor that prevents flaps from equilibrating into structures that lead to duplications and deletions. Also possesses 5'-3' exonuclease activity on nicked or gapped double-stranded DNA, and exhibits RNase H activity. Also involved in replication and repair of rDNA and in repairing mitochondrial DNA. The polypeptide is Flap endonuclease 1 (Kluyveromyces lactis (strain ATCC 8585 / CBS 2359 / DSM 70799 / NBRC 1267 / NRRL Y-1140 / WM37) (Yeast)).